Consider the following 426-residue polypeptide: Serine protease HTRA2, mitochondrial (426 aa).

Residues 1 to 30 constitute a mitochondrion transit peptide; sequence MALRGSHRLDDFIRRCSALTLFHSQAPSRR. The segment at 30–59 is disordered; the sequence is RVSHCGRDRRQQQDPPGQGRQEQQESGGGH. The propeptide occupies 31-78; sequence VSHCGRDRRQQQDPPGQGRQEQQESGGGHWSRFGWRSLIRFFVPFSLG. A compositionally biased stretch (low complexity) spans 42–54; sequence QDPPGQGRQEQQE. The helical transmembrane segment at 68–86 threads the bilayer; that stretch reads LIRFFVPFSLGAVASSLVI. The IAP-binding motif lies at 79–82; sequence AVAS. The segment at 143–306 is serine protease; sequence SNGSGFIIEQ…IPIDYVKVFL (164 aa). Catalysis depends on charge relay system residues H161, D193, and S270. In terms of domain architecture, PDZ spans 329 to 414; sequence MGITMLTLTP…HLDIVILRGV (86 aa).

This sequence belongs to the peptidase S1C family. As to quaternary structure, interacts with th/DIAP1 (via BIR 2 domain).

The protein localises to the mitochondrion intermembrane space. The protein resides in the mitochondrion membrane. It carries out the reaction Cleavage of non-polar aliphatic amino-acids at the P1 position, with a preference for Val, Ile and Met. At the P2 and P3 positions, Arg is selected most strongly with a secondary preference for other hydrophilic residues.. In terms of biological role, serine protease that shows proteolytic activity against a non-specific substrate beta-casein. Promotes or induces cell death either by direct binding to and inhibition of BIRC proteins (also called inhibitor of apoptosis proteins, IAPs), leading to an increase in caspase activity, or by a BIRC inhibition-independent, caspase-independent and serine protease activity-dependent mechanism. Can antagonize antiapoptotic activity of th/Diap1 by directly inducing the degradation of th/Diap1. The protein is Serine protease HTRA2, mitochondrial of Drosophila ananassae (Fruit fly).